Reading from the N-terminus, the 470-residue chain is Cytochrome P450 monooxygenase FUM2 (470 aa).

C414 contacts heme.

It belongs to the cytochrome P450 family. Heme serves as cofactor.

Its pathway is mycotoxin biosynthesis. Functionally, cytochrome P450 monooxygenase; part of the gene cluster that mediates the biosynthesis of fumonisins B1 (FB1), B2 (FB2), B3 (FB3), and B4 (FB4), which are carcinogenic mycotoxins. Within the pathway, FUM2 performs the C-10 hydroxylation present in FB2 and FB4 and which occurs early in the biosynthesis. The biosynthesis starts with the FUM1-catalyzed carbon chain assembly from one molecule of acetyl-CoA, eight molecules of malonyl-CoA, and two molecules of methionine (in S-adenosyl form). The C18 polyketide chain is released from the enzyme by a nucleophilic attack of a carbanion, which is derived from R-carbon of alanine by decarboxylation, on the carbonyl carbon of polyketide acyl chain. This step is catalyzed by the pyridoxal 5'-phosphate-dependent aminoacyl transferase FUM8. The resultant 3-keto intermediate is then stereospecifically reduced to a 3-hydroxyl product by reductase FUM13. Subsequent oxidations at C-10 by the cytochrome P450 monooxygenase FUM2, C-14 and C-15 by FUM6, FUM12 or FUM15, tricarballylic esterification of the hydroxyl groups on C-14 and C-15 by acyltransferase FUM14, and C-5 hydroxylation by 2-keto-glutarate-dependent dioxygenase FUM3 furnish the biosynthesis of fumonisins. The tricarballylic moieties are most likely derived from the citric acid cycle, and their addition to the carbon backbone may involve FUM7, FUM10, FUM11 and FUM14. The chain is Cytochrome P450 monooxygenase FUM2 from Gibberella moniliformis (strain M3125 / FGSC 7600) (Maize ear and stalk rot fungus).